The chain runs to 159 residues: Cyclic pyranopterin monophosphate synthase (159 aa).

Substrate-binding positions include 76-78 and 114-115; these read LCH and ME. The active site involves aspartate 129.

The protein belongs to the MoaC family. As to quaternary structure, homohexamer; trimer of dimers.

It carries out the reaction (8S)-3',8-cyclo-7,8-dihydroguanosine 5'-triphosphate = cyclic pyranopterin phosphate + diphosphate. It functions in the pathway cofactor biosynthesis; molybdopterin biosynthesis. In terms of biological role, catalyzes the conversion of (8S)-3',8-cyclo-7,8-dihydroguanosine 5'-triphosphate to cyclic pyranopterin monophosphate (cPMP). The protein is Cyclic pyranopterin monophosphate synthase of Oleidesulfovibrio alaskensis (strain ATCC BAA-1058 / DSM 17464 / G20) (Desulfovibrio alaskensis).